The primary structure comprises 344 residues: MPLIPYALTRPFLFGLDAEHAHELTLASIARLQNTPLQCLWQQPRIDDPVTLAGVRFPNRIGLAAGLDKNGRCIDGFGAMGFGFIEVGTVTPKGQPGNPKPRIFRLPQAEALINRLGFNNDGLDAFLANVRRAGFRQGGGVLGLNIGKNAATPIEDAVDDYLLGLEGVYPHADYVTVNISSPNTQNLRSLQSDAALDALLGRLQERRQQLIARHGRSVPMFVKIAPDLDEAQVDVIAATLKKNAVDGVIATNTTLSRDAVRGQAHATEVGGLSGRPVFEASNRVVGQLRAALGAGYPIIGVGGVMSGADARAKRDVGADVVQIYTGLIYRGPALVSEAARALKG.

Residues 65–69 (AGLDK) and Thr89 contribute to the FMN site. Lys69 serves as a coordination point for substrate. 114 to 118 (NRLGF) is a binding site for substrate. Positions 145 and 178 each coordinate FMN. Position 178 (Asn178) interacts with substrate. The active-site Nucleophile is Ser181. Asn183 is a substrate binding site. Lys223 and Thr251 together coordinate FMN. 252–253 (NT) contributes to the substrate binding site. FMN contacts are provided by residues Gly274, Gly303, and 324–325 (YT).

Belongs to the dihydroorotate dehydrogenase family. Type 2 subfamily. As to quaternary structure, monomer. It depends on FMN as a cofactor.

It is found in the cell membrane. The catalysed reaction is (S)-dihydroorotate + a quinone = orotate + a quinol. It functions in the pathway pyrimidine metabolism; UMP biosynthesis via de novo pathway; orotate from (S)-dihydroorotate (quinone route): step 1/1. In terms of biological role, catalyzes the conversion of dihydroorotate to orotate with quinone as electron acceptor. The chain is Dihydroorotate dehydrogenase (quinone) from Methylibium petroleiphilum (strain ATCC BAA-1232 / LMG 22953 / PM1).